The chain runs to 2628 residues: Hemagglutinin A (2628 aa).

A signal peptide spans 1-24 (MRKLNSLFSLAVLLSLLCWGQTAA). 5 peptidase C25-like regions span residues 25-539 (AQGG…TPPP), 540-995 (GGTS…TPPP), 996-1451 (GGTS…TPPP), 1452-1907 (GGTS…TPPP), and 2074-2628 (IDAD…LAVK). Disordered stretches follow at residues 493–512 (WDAP…LSES), 520–546 (SWKT…SFAG), 944–1002 (KWDA…SFAG), 1400–1458 (KWDA…SFAG), 1856–1881 (KWDA…SESF), 1890–1909 (KTID…PPGG), and 2336–2358 (SSWK…PPGG). Residues 496 to 508 (PNGTPNPNPGTTT) are compositionally biased toward low complexity.

It belongs to the peptidase C25 family.

Functionally, agglutinates erythrocytes. The protein is Hemagglutinin A (hagA) of Porphyromonas gingivalis (Bacteroides gingivalis).